We begin with the raw amino-acid sequence, 284 residues long: Bifunctional protein FolD (284 aa).

NADP(+)-binding positions include 165 to 167 (GAS), I190, and I231.

The protein belongs to the tetrahydrofolate dehydrogenase/cyclohydrolase family. Homodimer.

The enzyme catalyses (6R)-5,10-methylene-5,6,7,8-tetrahydrofolate + NADP(+) = (6R)-5,10-methenyltetrahydrofolate + NADPH. It carries out the reaction (6R)-5,10-methenyltetrahydrofolate + H2O = (6R)-10-formyltetrahydrofolate + H(+). It functions in the pathway one-carbon metabolism; tetrahydrofolate interconversion. In terms of biological role, catalyzes the oxidation of 5,10-methylenetetrahydrofolate to 5,10-methenyltetrahydrofolate and then the hydrolysis of 5,10-methenyltetrahydrofolate to 10-formyltetrahydrofolate. This Alkaliphilus metalliredigens (strain QYMF) protein is Bifunctional protein FolD.